Reading from the N-terminus, the 179-residue chain is Plasmid-derived single-stranded DNA-binding protein (179 aa).

The SSB domain occupies 6 to 110; that stretch reads INKVILVGRL…ILVKTTGTMQ (105 aa). Residues 55–61 mediate DNA binding; that stretch reads WHRVVLF. Residues 117 to 179 are disordered; that stretch reads GAQTQPEEGQ…DYGFSDDIPF (63 aa). The segment covering 118–132 has biased composition (polar residues); the sequence is AQTQPEEGQQFSGQP. The span at 145–155 shows a compositional bias: basic residues; it reads GGAKTKGRGRK. Positions 167-179 are enriched in acidic residues; sequence EGDDYGFSDDIPF.

Homotetramer.

Its function is as follows. May contribute to the conjugative processing of DNA. It has a functional relationship with Psi (plasmid-mediated sos inhibition) proteins. This is Plasmid-derived single-stranded DNA-binding protein (ssbF) from Escherichia coli (strain K12).